The following is a 62-amino-acid chain: Sperm protamine P1 (62 aa).

Residues 1-62 (MARSRRHSRS…RCSRRRRRRC (62 aa)) form a disordered region.

The protein belongs to the protamine P1 family. As to expression, testis.

It is found in the nucleus. It localises to the chromosome. Its function is as follows. Protamines substitute for histones in the chromatin of sperm during the haploid phase of spermatogenesis. They compact sperm DNA into a highly condensed, stable and inactive complex. In Planigale ingrami (Long-tailed planigale), this protein is Sperm protamine P1 (PRM1).